A 290-amino-acid chain; its full sequence is 30 kDa spicule matrix protein alpha (290 aa).

An N-terminal signal peptide occupies residues 1–20; it reads MRGFVYVLVCVLALASFSRA. In terms of domain architecture, C-type lectin spans 92–162; sequence ANMYCGQMHP…YTNWERMTAP (71 aa). Asn-102 is a glycosylation site (N-linked (GlcNAc...) asparagine).

As to expression, accumulates exclusively in mineralized tissues.

In terms of biological role, matrix protein of the sea urchin embryo spicule. The function of the matrix proteins is to direct crystal growth in certain orientations and inhibit growth in others. The polypeptide is 30 kDa spicule matrix protein alpha (SM30A) (Strongylocentrotus purpuratus (Purple sea urchin)).